The sequence spans 434 residues: UDP-N-acetylmuramate--L-alanine ligase (434 aa).

ATP is bound at residue 110–116 (GAHGKTS).

This sequence belongs to the MurCDEF family.

It is found in the cytoplasm. It carries out the reaction UDP-N-acetyl-alpha-D-muramate + L-alanine + ATP = UDP-N-acetyl-alpha-D-muramoyl-L-alanine + ADP + phosphate + H(+). It functions in the pathway cell wall biogenesis; peptidoglycan biosynthesis. Cell wall formation. In Limosilactobacillus reuteri (strain DSM 20016) (Lactobacillus reuteri), this protein is UDP-N-acetylmuramate--L-alanine ligase.